Consider the following 209-residue polypeptide: Ion-translocating oxidoreductase complex subunit G (209 aa).

A helical membrane pass occupies residues 9 to 29 (GLVLAIFACASTGLVAVTHYL). Threonine 175 carries the FMN phosphoryl threonine modification.

This sequence belongs to the RnfG family. As to quaternary structure, the complex is composed of six subunits: RnfA, RnfB, RnfC, RnfD, RnfE and RnfG. FMN is required as a cofactor.

It localises to the cell inner membrane. In terms of biological role, part of a membrane-bound complex that couples electron transfer with translocation of ions across the membrane. The protein is Ion-translocating oxidoreductase complex subunit G of Vibrio atlanticus (strain LGP32) (Vibrio splendidus (strain Mel32)).